A 474-amino-acid polypeptide reads, in one-letter code: Synaptotagmin-17 (474 aa).

The disordered stretch occupies residues W60–L112. Low complexity predominate over residues S96 to L112. Residues S118 and S119 each carry the phosphoserine modification. C2 domains are found at residues Q184–K310 and E321–H455.

The protein belongs to the synaptotagmin family.

It is found in the membrane. Its function is as follows. Plays a role in dendrite formation by melanocytes. The sequence is that of Synaptotagmin-17 (SYT17) from Pongo abelii (Sumatran orangutan).